A 359-amino-acid chain; its full sequence is Peptide chain release factor 1 (359 aa).

Gln-236 bears the N5-methylglutamine mark.

This sequence belongs to the prokaryotic/mitochondrial release factor family. Methylated by PrmC. Methylation increases the termination efficiency of RF1.

The protein localises to the cytoplasm. Its function is as follows. Peptide chain release factor 1 directs the termination of translation in response to the peptide chain termination codons UAG and UAA. The polypeptide is Peptide chain release factor 1 (Ureaplasma parvum serovar 3 (strain ATCC 27815 / 27 / NCTC 11736)).